Here is a 387-residue protein sequence, read N- to C-terminus: 3-ketoacyl-CoA thiolase (387 aa).

Residue Cys-91 is the Acyl-thioester intermediate of the active site. Residues His-343 and Cys-373 each act as proton acceptor in the active site.

This sequence belongs to the thiolase-like superfamily. Thiolase family. Heterotetramer of two alpha chains (FadB) and two beta chains (FadA).

Its subcellular location is the cytoplasm. It carries out the reaction an acyl-CoA + acetyl-CoA = a 3-oxoacyl-CoA + CoA. The protein operates within lipid metabolism; fatty acid beta-oxidation. In terms of biological role, catalyzes the final step of fatty acid oxidation in which acetyl-CoA is released and the CoA ester of a fatty acid two carbons shorter is formed. The chain is 3-ketoacyl-CoA thiolase from Vibrio cholerae serotype O1 (strain ATCC 39541 / Classical Ogawa 395 / O395).